Consider the following 409-residue polypeptide: NADH-quinone oxidoreductase subunit D (409 aa).

Belongs to the complex I 49 kDa subunit family. NDH-1 is composed of 14 different subunits. Subunits NuoB, C, D, E, F, and G constitute the peripheral sector of the complex.

It is found in the cell inner membrane. The catalysed reaction is a quinone + NADH + 5 H(+)(in) = a quinol + NAD(+) + 4 H(+)(out). NDH-1 shuttles electrons from NADH, via FMN and iron-sulfur (Fe-S) centers, to quinones in the respiratory chain. The immediate electron acceptor for the enzyme in this species is believed to be ubiquinone. Couples the redox reaction to proton translocation (for every two electrons transferred, four hydrogen ions are translocated across the cytoplasmic membrane), and thus conserves the redox energy in a proton gradient. In Thermus thermophilus (strain ATCC BAA-163 / DSM 7039 / HB27), this protein is NADH-quinone oxidoreductase subunit D (nuoD).